Here is a 507-residue protein sequence, read N- to C-terminus: MITLTPGHLTLPQLRQIARESVQLTLDPASFAKIDAGAKAVADIAAKGEPAYGINTGFGRLASTHIPHDQLELLQKNLVLSHAVGVGEPMARSSVRLLMALKLSSLGRGHSGIRREVMDALIKLFNADVLPLIPVKGSVGASGDLAPLAHMSAVLLGVGEVFIRGERASALDGLRVAGLAPLTLQAKEGLALLNGTQASTALALDNMFSIEDLYRTALVAGALSVDAAAGSVKPFDARIHELRGHQGQIDAAASYRDLLAGSPINQSHLDCDKVQDPYSLRCQPQVMGACLDQMRHAADVLLVEANAVSDNPLIFPDTGEVLSGGNFHAEPVAFAADNLALAASEIGALAERRIALLIDATLSGLPPFLVRDGGVNSGFMIAHVTAAALASENKTLAHPASVDSLPTSANQEDHVSMATFAARKLADIADNTKHILAIELLAAAQGVDLRAPYHTSPKLAPVMETIRGKVAHYELDHYFAPDIAVIAKLVGERAFAKVAPFSFASEQ.

Positions 141-143 (ASG) form a cross-link, 5-imidazolinone (Ala-Gly). Serine 142 is subject to 2,3-didehydroalanine (Ser).

This sequence belongs to the PAL/histidase family. Contains an active site 4-methylidene-imidazol-5-one (MIO), which is formed autocatalytically by cyclization and dehydration of residues Ala-Ser-Gly.

The protein resides in the cytoplasm. It carries out the reaction L-histidine = trans-urocanate + NH4(+). It functions in the pathway amino-acid degradation; L-histidine degradation into L-glutamate; N-formimidoyl-L-glutamate from L-histidine: step 1/3. In Burkholderia lata (strain ATCC 17760 / DSM 23089 / LMG 22485 / NCIMB 9086 / R18194 / 383), this protein is Histidine ammonia-lyase.